The primary structure comprises 236 residues: Small ribosomal subunit protein uS2c (236 aa).

It belongs to the universal ribosomal protein uS2 family.

It is found in the plastid. It localises to the chloroplast. This Pisum sativum (Garden pea) protein is Small ribosomal subunit protein uS2c (rps2).